The sequence spans 898 residues: Alanine--tRNA ligase (898 aa).

Positions 584, 588, 686, and 690 each coordinate Zn(2+).

The protein belongs to the class-II aminoacyl-tRNA synthetase family. It depends on Zn(2+) as a cofactor.

It is found in the cytoplasm. The catalysed reaction is tRNA(Ala) + L-alanine + ATP = L-alanyl-tRNA(Ala) + AMP + diphosphate. In terms of biological role, catalyzes the attachment of alanine to tRNA(Ala) in a two-step reaction: alanine is first activated by ATP to form Ala-AMP and then transferred to the acceptor end of tRNA(Ala). Also edits incorrectly charged Ser-tRNA(Ala) and Gly-tRNA(Ala) via its editing domain. The protein is Alanine--tRNA ligase of Myxococcus xanthus (strain DK1622).